The sequence spans 670 residues: MEVSETDEHLTRLNQARDIVKTDQSLFPEIVRNILSVANYSDIRYKKWMANFLWFGFSSKNVKFEQKLDLAVTCLDTIVSLYAVDNEEVKKDVISCSCTIYPLVFLHCCTSPNDSSTWDTLTKLKNEIINDFDKGNKPLLISCIKFISCVILTQVPGIRDPRLVTKSDVSLSKVPTHHPFINSNILRIEANDLIEKIFSILFSDSLNVLYITSVLNILPVLVKRRKELAPKIIGSLLEFHLPNPKDEIELSNESKLAIRCIEKNLKLILLHLAKSTGASSSSVEKIHAYLSGQIYHTKVDESLKKRQYEGNISAASKRVKSSAVQSLVERMQPQLSSHDGLQNNPLISIFASQTAINPLANFDVTSIPVEVATEIVLTSLLKIDKNYFHQQINMLRERVRSLSEPESLGLDQQVDEDEDEDYEPPEVDVQTINASVEREAARLEGSAPSNVVTDAFELPTPDSLSPMAILEYFHGALSRLFDYAPQFERSIVSSSNLQNLTLENVDNTVWDKRHWAILLPRLCTRGLLNYQPVTSGEESGDASFTLSSFVRGQLFTYVASNWRSSTNLILNWLSEEWYNDRLMLENPDCHEYEDVKWEGPQYEKWALKVIDSILPYLEAKDKVFMIFMSELPELTDAIVDKIKFVCLDPDKTKLGFMTFQYLIMFRLTCT.

This sequence to yeast PTA1. As to quaternary structure, component of the cleavage and polyadenylation factor (CPF) complex, which is composed of cft1, cft2, ysh1, pta1, swd2, pfs2, dis2, yth1, ssu72, and fip1.

The protein localises to the nucleus. Component of the cleavage and polyadenylation factor (CPF) complex, which plays a key role in polyadenylation-dependent pre-mRNA 3'-end formation and cooperates with cleavage factors including the CFIA complex and NAB4/CFIB. The protein is mRNA cleavage and polyadenylation specificity factor complex subunit pta1 (pta1) of Schizosaccharomyces pombe (strain 972 / ATCC 24843) (Fission yeast).